The sequence spans 94 residues: MFRSDKAEKMDKRRRRQSKAKASCSEEVSSIEWEAVKMSEEEEDLISRMYKLVGDRWELIAGRIPGRTPEEIERYWLMKHGVVFANRRRDFFRK.

Residues 1-10 (MFRSDKAEKM) form an S1, required for cell-to-cell movements region. Over residues 1-11 (MFRSDKAEKMD) the composition is skewed to basic and acidic residues. The interval 1-25 (MFRSDKAEKMDKRRRRQSKAKASCS) is disordered. One can recognise a Myb-like domain in the interval 30 to 80 (SIEWEAVKMSEEEEDLISRMYKLVGDRWELIAGRIPGRTPEEIERYWLMKH). The segment at 76–79 (WLMK) is S2, required for cell-to-cell movements and nuclear localization.

Interacts with GL3 and BHLH2. Interacts with SIEL. As to expression, expressed in trichomes and in young developing leaves, as well as in root hair and stele cells (pericycle and vascular tissues). Expressed in epidermal root hairless cells (atrichoblasts) and moves to root hair cells (trichoblasts) by a cell-to-cell movement through plasmodesmata (at protein level).

It localises to the nucleus. Transcription factor. Determines the fate of epidermal cell differentiation. Represses trichome development by lateral inhibition. Together with GL3 or BHLH2, promotes the formation of hair developing cells (H position) in root epidermis, probably by inhibiting non-hair cell formation. Represses the expression of GL2 and WER in H cells. Positively regulates stomatal formation in the hypocotyl. This chain is Transcription factor CPC (CPC), found in Arabidopsis thaliana (Mouse-ear cress).